The chain runs to 309 residues: Olfactory receptor 7A40 (309 aa).

Residues 1–26 lie on the Extracellular side of the membrane; the sequence is MELKNDTQISKFILLGISEDPLWQPF. An N-linked (GlcNAc...) asparagine glycan is attached at asparagine 5. A helical membrane pass occupies residues 27-47; the sequence is LFGLFLFMYLVTLLGNLLIII. The Cytoplasmic segment spans residues 48–57; that stretch reads ATITDSHLHT. The helical transmembrane segment at 58–78 threads the bilayer; it reads PMYFFLSNLSFADICFTSASI. The Extracellular portion of the chain corresponds to 79 to 97; the sequence is PKMLVNIQTKNKVITYEGC. A disulfide bridge links cysteine 97 with cysteine 179. Residues 98-118 form a helical membrane-spanning segment; the sequence is ISQVFFFILFGVLDNFLLAVM. Over 119 to 139 the chain is Cytoplasmic; that stretch reads AYDRYVAICHPLHYMVIMNCR. The helical transmembrane segment at 140 to 160 threads the bilayer; that stretch reads LCGFLVLGSWVTTALNSLLQS. The Extracellular segment spans residues 161 to 196; the sequence is SMALRLSFCTDLKIPHFVCELNQLVLLACNDTFPND. A helical transmembrane segment spans residues 197–217; that stretch reads MVMYFAAILLGGGPLAGILYS. At 218 to 244 the chain is on the cytoplasmic side; that stretch reads YSKIVSSIRAISSSQGKYKAFSTCASH. A helical membrane pass occupies residues 245 to 265; the sequence is LSVVSLFYSTLLGVYLSSSFT. Over 266-269 the chain is Extracellular; sequence QNSH. The chain crosses the membrane as a helical span at residues 270–292; it reads STARASVMYSVVTPMLNPFIYSL. Residues 293–309 lie on the Cytoplasmic side of the membrane; sequence RNKDLMGALRRLLRRKS.

This sequence belongs to the G-protein coupled receptor 1 family.

The protein localises to the cell membrane. Functionally, odorant receptor. The sequence is that of Olfactory receptor 7A40 from Mus musculus (Mouse).